A 507-amino-acid chain; its full sequence is Maturase K (507 aa).

Belongs to the intron maturase 2 family. MatK subfamily.

It localises to the plastid. The protein localises to the chloroplast. Usually encoded in the trnK tRNA gene intron. Probably assists in splicing its own and other chloroplast group II introns. The polypeptide is Maturase K (Ranunculus acris (Meadow buttercup)).